We begin with the raw amino-acid sequence, 607 residues long: Potassium transporter KimA (607 aa).

Residues 1 to 30 (MYHSIKRFLIGKPLKSQAAGEQKLTKLKAL) lie on the Cytoplasmic side of the membrane. Residues 31–49 (AMLSSDALSSVAYGTEQIL) traverse the membrane as a helical segment. Positions 36 and 43 each coordinate K(+). Over 50–62 (IILATISAAAFWY) the chain is Extracellular. The chain crosses the membrane as a helical span at residues 63–84 (SIPIAVGVLILLLALILSYRQI). The Cytoplasmic segment spans residues 85-105 (IYAYPQGGGAYIVSKENLGEK). The helical transmembrane segment at 106–134 (PGLIAGGSLLVDYILTVAVSISAGTDAIT) threads the bilayer. K(+) contacts are provided by D117 and S125. Residues 135–142 (SAFPALHD) are Extracellular-facing. Residues 143 to 162 (YHVPIAIFLVLVIMILNLRG) form a helical membrane-spanning segment. Over 163–166 (LSES) the chain is Cytoplasmic. Residues 167–190 (ASILAYPVYLFVVALLVLIAVGLF) form a helical membrane-spanning segment. The Extracellular portion of the chain corresponds to 191-214 (KLMTGQIDQPAHHTSLGTPVAGIT). The chain crosses the membrane as a helical span at residues 215–238 (LFLLLKAFSSGCSALTGVEAISNA). Topologically, residues 239 to 249 (IPAFKNPPARN) are cytoplasmic. A helical membrane pass occupies residues 250-271 (AARTLAMMGILLAILFSGITVL). Residues 272-298 (AYGYGTAPKPDETVVSQIASETFGRNV) are Extracellular-facing. Residues 299 to 323 (FYYVIQGVTSLILVLAANTGFSAFP) form a helical membrane-spanning segment. Residues 324-347 (QLAFNLARDQYMPRMFTVRGDRLG) are Cytoplasmic-facing. Residues 348–366 (FSNGIIFLGFASIVLIILF) traverse the membrane as a helical segment. At 367-372 (GGQTEH) the chain is on the extracellular side. A helical membrane pass occupies residues 373–393 (LIPLYAVGVFIPFTLSQTGMC). Residues 394–405 (MKWIKQKPKGWI) lie on the Cytoplasmic side of the membrane. A helical membrane pass occupies residues 406–428 (GKMLINSCGALISFMVLSILFVT). Residues 429 to 431 (KFN) are Extracellular-facing. Residues 432 to 447 (VVWPVLIFMPIVVLLF) form a helical membrane-spanning segment. At 448–607 (FAIKNHYTAV…VATLPYHFKK (160 aa)) the chain is on the cytoplasmic side.

The protein belongs to the amino acid-polyamine-organocation (APC) superfamily. As to quaternary structure, homodimer.

It localises to the cell membrane. The enzyme catalyses K(+)(in) + H(+)(in) = K(+)(out) + H(+)(out). Potassium uptake increases at lower external pH and is abolished by the proton ionophore carbonyl cyanide m-chlorophenylhydrazone (CCCP). Binds cyclic di-AMP (c-di-AMP), which inhibits the potassium transport activity. Functionally, high-affinity potassium transporter. Functions as a K(+)/H(+) symporter. This Bacillus subtilis (strain 168) protein is Potassium transporter KimA.